We begin with the raw amino-acid sequence, 237 residues long: RING finger protein vilya (237 aa).

The RING-type zinc finger occupies 21–69; it reads CNSCCALFCDKKHTFFLLACHHVFCERCVKVSAGRTPSDAPIFECSTCR. The tract at residues 172–237 is disordered; it reads MHRMAQAYRS…IHPPNNSFDL (66 aa). Low complexity predominate over residues 180-195; it reads RSRSLTSQSSSSAQRS. Residues 221-237 are compositionally biased toward polar residues; sequence RQQITSFIHPPNNSFDL.

In terms of assembly, may interact with itself and with narya and nenya through their RING-type zinc fingers. As to expression, expressed in nurse cell and pro-oocytes (at protein level).

Its subcellular location is the chromosome. In terms of biological role, required for the formation of DNA double-strand breaks during meiosis together with narya and nenya. The polypeptide is RING finger protein vilya (Drosophila melanogaster (Fruit fly)).